Consider the following 234-residue polypeptide: UPF0502 protein BTH_II0990 (234 aa).

This sequence belongs to the UPF0502 family.

The protein is UPF0502 protein BTH_II0990 of Burkholderia thailandensis (strain ATCC 700388 / DSM 13276 / CCUG 48851 / CIP 106301 / E264).